A 20-amino-acid polypeptide reads, in one-letter code: Protein C activator (20 aa).

The Peptidase S1 domain maps to 1–20; it reads VVGGDECNINEHRSLALMYA.

This sequence belongs to the peptidase S1 family. Snake venom subfamily. Monomer. Post-translationally, glycosylated. Expressed by the venom gland.

The protein resides in the secreted. Its activity is regulated as follows. Inhibited by calcium. Functionally, snake venom serine protease that selectively cleaves the heavy chain of protein C (PROC). This activation is thrombomodulin-independent. This Agkistrodon bilineatus (Cantil) protein is Protein C activator.